The following is a 486-amino-acid chain: Cobyric acid synthase (486 aa).

One can recognise a GATase cobBQ-type domain in the interval 248–439; that stretch reads VLRIVVPALP…LHGLFDTPHA (192 aa). The active-site Nucleophile is the Cys328. His431 is a catalytic residue.

It belongs to the CobB/CobQ family. CobQ subfamily.

It participates in cofactor biosynthesis; adenosylcobalamin biosynthesis. Its function is as follows. Catalyzes amidations at positions B, D, E, and G on adenosylcobyrinic A,C-diamide. NH(2) groups are provided by glutamine, and one molecule of ATP is hydrogenolyzed for each amidation. In Burkholderia mallei (strain ATCC 23344), this protein is Cobyric acid synthase.